The following is an 807-amino-acid chain: Spondin-1 (807 aa).

Residues 1-28 form the signal peptide; the sequence is MRLSPAPLRLSRGPALLALALPLAAALA. The Reelin domain maps to 29–194; it reads FSDETLDKVA…DPTLDGVTDR (166 aa). Disulfide bonds link Cys-44-Cys-128, Cys-156-Cys-182, Cys-199-Cys-336, Cys-200-Cys-340, Cys-202-Cys-415, Cys-443-Cys-480, Cys-454-Cys-489, Cys-459-Cys-494, Cys-502-Cys-538, Cys-513-Cys-517, Cys-548-Cys-554, Cys-559-Cys-595, Cys-570-Cys-574, Cys-605-Cys-610, Cys-615-Cys-650, Cys-626-Cys-630, and Cys-660-Cys-665. In terms of domain architecture, Spondin spans 195-388; that stretch reads PILDCCACGT…LTSLDHPQSP (194 aa). Asn-214 carries N-linked (GlcNAc...) asparagine glycosylation. Positions 325, 354, and 358 each coordinate Ca(2+). TSP type-1 domains lie at 442–495, 501–555, 558–611, 614–666, and 668–721; these read TCIY…PGCS, TCTM…EECS, SCLV…PECH, PCLL…PECP, and DCEL…RKCL. Asn-681 is a glycosylation site (N-linked (GlcNAc...) asparagine). A compositionally biased stretch (basic and acidic residues) spans 732–746; the sequence is REARESRRSEQLREE. The tract at residues 732–752 is disordered; the sequence is REARESRRSEQLREESDGEQF. The region spanning 754-806 is the TSP type-1 6 domain; that stretch reads GCRMRPWTAWSECTKLCGGGIQERYMTVKKRFKSSQFTSCKDKKEIRACNVHP.

In terms of assembly, binds to the central extracellular domain of APP and inhibits beta-secretase cleavage of APP. As to expression, expressed at high levels in the floor plate.

The protein localises to the secreted. It localises to the extracellular space. Its subcellular location is the extracellular matrix. Cell adhesion protein that promotes the attachment of spinal cord and sensory neuron cells and the outgrowth of neurites in vitro. May contribute to the growth and guidance of axons in both the spinal cord and the PNS. This is Spondin-1 (Spon1) from Rattus norvegicus (Rat).